Here is a 330-residue protein sequence, read N- to C-terminus: Ribose operon repressor (330 aa).

In terms of domain architecture, HTH lacI-type spans 2-56; the sequence is ATMKDVARLAGVSTSTVSHVINKDRFVSEAITAKVEAAIKELNYAPSALARSLKL. A DNA-binding region (H-T-H motif) is located at residues 4-23; the sequence is MKDVARLAGVSTSTVSHVIN.

Its function is as follows. Transcriptional repressor for the ribose rbsDACBK operon. RbsR binds to a region of perfect dyad symmetry spanning the rbs operon transcriptional start site. The affinity for the rbs operator is reduced by addition of ribose, consistent with ribose being the inducer of the operon. This Escherichia coli O6:H1 (strain CFT073 / ATCC 700928 / UPEC) protein is Ribose operon repressor (rbsR).